Here is a 272-residue protein sequence, read N- to C-terminus: uncharacterized protein (272 aa).

A signal peptide spans 1-20 (MKLRKIFLLPLISLSTLSVA). Cysteine 21 is lipidated: N-palmitoyl cysteine. Cysteine 21 is lipidated: S-diacylglycerol cysteine.

The protein belongs to the MG439/MG440 family.

It is found in the cell membrane. This is an uncharacterized protein from Mycoplasma genitalium (strain ATCC 33530 / DSM 19775 / NCTC 10195 / G37) (Mycoplasmoides genitalium).